A 206-amino-acid chain; its full sequence is Ribosomal RNA large subunit methyltransferase E (206 aa).

Gly61, Trp63, Asp81, Asp97, and Asp122 together coordinate S-adenosyl-L-methionine. Lys162 (proton acceptor) is an active-site residue.

Belongs to the class I-like SAM-binding methyltransferase superfamily. RNA methyltransferase RlmE family.

The protein localises to the cytoplasm. The catalysed reaction is uridine(2552) in 23S rRNA + S-adenosyl-L-methionine = 2'-O-methyluridine(2552) in 23S rRNA + S-adenosyl-L-homocysteine + H(+). In terms of biological role, specifically methylates the uridine in position 2552 of 23S rRNA at the 2'-O position of the ribose in the fully assembled 50S ribosomal subunit. The protein is Ribosomal RNA large subunit methyltransferase E of Neisseria meningitidis serogroup C (strain 053442).